Reading from the N-terminus, the 176-residue chain is Large ribosomal subunit protein uL6 (176 aa).

Belongs to the universal ribosomal protein uL6 family. In terms of assembly, part of the 50S ribosomal subunit.

Its function is as follows. This protein binds to the 23S rRNA, and is important in its secondary structure. It is located near the subunit interface in the base of the L7/L12 stalk, and near the tRNA binding site of the peptidyltransferase center. This chain is Large ribosomal subunit protein uL6, found in Burkholderia ambifaria (strain ATCC BAA-244 / DSM 16087 / CCUG 44356 / LMG 19182 / AMMD) (Burkholderia cepacia (strain AMMD)).